The sequence spans 121 residues: Cell division protein FtsB (121 aa).

The Cytoplasmic portion of the chain corresponds to 1 to 6; the sequence is MRNWRW. A helical membrane pass occupies residues 7 to 24; sequence LLLVLAVLLAWLQYRFWF. Residues 25–121 are Periplasmic-facing; it reads GPGNSGEVMM…PEPVDPVDHP (97 aa). Residues 31-66 adopt a coiled-coil conformation; it reads EVMMLEAQVAHQTQDNEGLRQRNQALAAEVKDLKDG. The segment at 98–121 is disordered; the sequence is APASAEASAPAQQAPEPVDPVDHP. Over residues 99–113 the composition is skewed to low complexity; sequence PASAEASAPAQQAPE.

Belongs to the FtsB family. Part of a complex composed of FtsB, FtsL and FtsQ.

The protein localises to the cell inner membrane. Its function is as follows. Essential cell division protein. May link together the upstream cell division proteins, which are predominantly cytoplasmic, with the downstream cell division proteins, which are predominantly periplasmic. This Xanthomonas axonopodis pv. citri (strain 306) protein is Cell division protein FtsB.